Here is a 280-residue protein sequence, read N- to C-terminus: Acetyl-coenzyme A carboxylase carboxyl transferase subunit beta (280 aa).

The CoA carboxyltransferase N-terminal domain maps to 28-280 (IMTKCPSCRT…TLTKLLAMHQ (253 aa)). Zn(2+) is bound by residues Cys-32, Cys-35, Cys-51, and Cys-54. A C4-type zinc finger spans residues 32–54 (CPSCRTIMYTKDLKKNLSVCRTC).

It belongs to the AccD/PCCB family. Acetyl-CoA carboxylase is a heterohexamer composed of biotin carboxyl carrier protein (AccB), biotin carboxylase (AccC) and two subunits each of ACCase subunit alpha (AccA) and ACCase subunit beta (AccD). Zn(2+) serves as cofactor.

The protein localises to the cytoplasm. The catalysed reaction is N(6)-carboxybiotinyl-L-lysyl-[protein] + acetyl-CoA = N(6)-biotinyl-L-lysyl-[protein] + malonyl-CoA. Its pathway is lipid metabolism; malonyl-CoA biosynthesis; malonyl-CoA from acetyl-CoA: step 1/1. Its function is as follows. Component of the acetyl coenzyme A carboxylase (ACC) complex. Biotin carboxylase (BC) catalyzes the carboxylation of biotin on its carrier protein (BCCP) and then the CO(2) group is transferred by the transcarboxylase to acetyl-CoA to form malonyl-CoA. The sequence is that of Acetyl-coenzyme A carboxylase carboxyl transferase subunit beta from Shouchella clausii (strain KSM-K16) (Alkalihalobacillus clausii).